The following is a 173-amino-acid chain: Bifunctional protein PyrR (173 aa).

Residues 93-105 carry the PRPP-binding motif; sequence IILVDDVLYTGRT.

Belongs to the purine/pyrimidine phosphoribosyltransferase family. PyrR subfamily. In terms of assembly, homodimer and homohexamer; in equilibrium.

It catalyses the reaction UMP + diphosphate = 5-phospho-alpha-D-ribose 1-diphosphate + uracil. Functionally, regulates transcriptional attenuation of the pyrimidine nucleotide (pyr) operon by binding in a uridine-dependent manner to specific sites on pyr mRNA. This disrupts an antiterminator hairpin in the RNA and favors formation of a downstream transcription terminator, leading to a reduced expression of downstream genes. Its function is as follows. Also displays a weak uracil phosphoribosyltransferase activity which is not physiologically significant. This chain is Bifunctional protein PyrR, found in Streptococcus equi subsp. zooepidemicus (strain H70).